A 565-amino-acid chain; its full sequence is Sulfite reductase [NADPH] hemoprotein beta-component (565 aa).

[4Fe-4S] cluster is bound by residues Cys429, Cys435, Cys474, and Cys478. Cys478 contacts siroheme.

It belongs to the nitrite and sulfite reductase 4Fe-4S domain family. In terms of assembly, alpha(8)-beta(8). The alpha component is a flavoprotein, the beta component is a hemoprotein. It depends on siroheme as a cofactor. Requires [4Fe-4S] cluster as cofactor.

It catalyses the reaction hydrogen sulfide + 3 NADP(+) + 3 H2O = sulfite + 3 NADPH + 4 H(+). The protein operates within sulfur metabolism; hydrogen sulfide biosynthesis; hydrogen sulfide from sulfite (NADPH route): step 1/1. Its function is as follows. Component of the sulfite reductase complex that catalyzes the 6-electron reduction of sulfite to sulfide. This is one of several activities required for the biosynthesis of L-cysteine from sulfate. In Shewanella sp. (strain MR-7), this protein is Sulfite reductase [NADPH] hemoprotein beta-component.